Here is a 310-residue protein sequence, read N- to C-terminus: Ribosomal RNA small subunit methyltransferase H (310 aa).

S-adenosyl-L-methionine is bound by residues 33-35 (AGH), Asp53, Phe79, Asp100, and Gln107.

Belongs to the methyltransferase superfamily. RsmH family.

The protein resides in the cytoplasm. The enzyme catalyses cytidine(1402) in 16S rRNA + S-adenosyl-L-methionine = N(4)-methylcytidine(1402) in 16S rRNA + S-adenosyl-L-homocysteine + H(+). Its function is as follows. Specifically methylates the N4 position of cytidine in position 1402 (C1402) of 16S rRNA. The protein is Ribosomal RNA small subunit methyltransferase H of Clostridium tetani (strain Massachusetts / E88).